A 259-amino-acid polypeptide reads, in one-letter code: NADPH-dependent reductase BacG (259 aa).

NADP(+) is bound by residues 12–15 (SQGI), 34–36 (SRN), 62–63 (DM), Ile90, Lys113, and 185–191 (GFIATDR).

Belongs to the short-chain dehydrogenases/reductases (SDR) family. Homodimer.

It localises to the cytoplasm. The protein operates within antibiotic biosynthesis; bacilysin biosynthesis. In terms of biological role, along with the bacABCDEF operon, BacG is involved in the biosynthesis of the nonribosomally synthesized dipeptide antibiotic bacilysin, composed of L-alanine and L-anticapsin. Bacilysin is an irreversible inactivator of the glutaminase domain of glucosamine synthetase. BacG catalyzes the stereoselective reduction of exocyclic-delta(3),delta(5)-dihydro-hydroxyphenylpyruvate (ex-H2HPP), adding a pro-S hydride equivalent to C4 position to yield tetrahydro-hydroxyphenylpyruvate (H4HPP). Although the 3Z,7R-ex-H2HPP isomer is kinetically disfavored by BacB and produced in a smaller quantity than 3E,7R-ex-H2HPP, it is the preferred substrate for the conjugate reduction reaction of BacG. This Bacillus subtilis (strain 168) protein is NADPH-dependent reductase BacG.